Consider the following 178-residue polypeptide: Fatty-acid and retinol-binding protein 1 (178 aa).

The N-terminal stretch at 1–16 is a signal peptide; that stretch reads MYHQLILMALIGVIMA. Asn-44 and Asn-75 each carry an N-linked (GlcNAc...) asparagine glycan. Coiled-coil stretches lie at residues 67–89 and 123–154; these read DAAL…ELRN and KLDM…LKAT. Residue Asn-157 is glycosylated (N-linked (GlcNAc...) asparagine).

The protein belongs to the fatty-acid and retinol-binding protein (FARBP) family. Post-translationally, N-glycosylated.

The protein localises to the secreted. In terms of biological role, binds retinol and different fatty acids. The chain is Fatty-acid and retinol-binding protein 1 from Onchocerca gutturosa.